Consider the following 117-residue polypeptide: Small ribosomal subunit protein uS19c (117 aa).

This sequence belongs to the universal ribosomal protein uS19 family.

It is found in the plastid. In terms of biological role, protein S19 forms a complex with S13 that binds strongly to the 16S ribosomal RNA. In Helicosporidium sp. subsp. Simulium jonesii (Green alga), this protein is Small ribosomal subunit protein uS19c (rps19).